Here is a 199-residue protein sequence, read N- to C-terminus: MTSINSFPRNIDWPSNIGIKKIEGTNPTVNAIKGLLYNGGSIYAFLYFVIAMFVEPTLQKQYQQRNDFSLFVLLRLRRIIAQLQKRLVMTPVSSLGFNEQNNFVERSTQTSDDNIIREDNSHWAEMIYQLQNMKQELQYFNRSSGQPSESIDDFVFQIKMVTDQVELTDRSRAFSNKSRNIIQGIREIKGWFVNGQVPR.

It is found in the peroxisome membrane. Functionally, component of the peroxisomal translocation machinery with PEX13 and PEX14. Interacts indirectly with the PTS1 receptor (PAS10/PEX5) and directly binds to PEX14. Required for import of both PTS1 and PTS2 proteins. The sequence is that of Peroxisomal membrane protein PEX17 (PEX17) from Saccharomyces cerevisiae (strain ATCC 204508 / S288c) (Baker's yeast).